The chain runs to 830 residues: Vacuolar protein sorting-associated protein 11 homolog (830 aa).

An RING-type; atypical zinc finger spans residues 733–775 (CDICREMLSMQSIYFLCQHSFHEECLNYKSTKRQEKFLCIICK).

It belongs to the VPS11 family. In terms of assembly, part of the homotypic fusion and vacuole protein sorting (HOPS) complex, composed of Vps16A, car/Vps33A, dor/Vps18, Vps39, Vps11 and lt/Vps41. Unlike in other species, not part of the class C core vacuole/endosome tethering (CORVET) complex.

The protein resides in the late endosome membrane. The protein localises to the lysosome membrane. Part of the homotypic fusion and vacuole protein sorting (HOPS) tethering complex involved in endo-lysosomal vesicle trafficking and lysosome biogenesis, but unlike in many other species does not form part of the class C core vacuole/endosome tethering (CORVET) complex. The HOPS complex facilitates docking and fusion of lysosomes with late endosomes and several other types of vesicles. The HOPS complex is also involved in autophagy, pigment granule biogenesis and crinophagy (the elimination of unused secretory granules through fusion with lysosomes). The HOPS complex probably instigates autophagosome-lysosome fusion by binding autophagosome-associated Syx17/syntaxin 17 and promoting assembly of the trans-SNARE complex. Independent of Syx17/syntaxin 17, HOPS is involved in biosynthetic transport to lysosomes and lysosome-related organelles such as eye-pigment granules. Required for autophagocytosis-dependent remodeling of myofibrils and transverse-tubules (T-tubules) during metamorphosis. The chain is Vacuolar protein sorting-associated protein 11 homolog from Drosophila melanogaster (Fruit fly).